The chain runs to 360 residues: Photosystem II protein D1 (360 aa).

3 helical membrane passes run 29–46 (YIGW…TATT), 118–133 (HFLL…EWEF), and 142–156 (WISV…AASA). Residue H118 participates in chlorophyll a binding. Residue W126 participates in pheophytin a binding. Residues D170 and E189 each coordinate [CaMn4O5] cluster. A helical membrane pass occupies residues 197-218 (FHQLGVAGVFGGSLFSAMHGSL). A chlorophyll a-binding site is contributed by H198. Residues H215 and 264–265 (SF) each bind a quinone. Position 215 (H215) interacts with Fe cation. H272 serves as a coordination point for Fe cation. A helical transmembrane segment spans residues 274-288 (FLGLWPVVGIWFTAL). H332, E333, D342, and A344 together coordinate [CaMn4O5] cluster. The propeptide occupies 345-360 (SGESLPVALTAPAVIG).

This sequence belongs to the reaction center PufL/M/PsbA/D family. PSII is composed of 1 copy each of membrane proteins PsbA, PsbB, PsbC, PsbD, PsbE, PsbF, PsbH, PsbI, PsbJ, PsbK, PsbL, PsbM, PsbT, PsbX, PsbY, PsbZ, Psb30/Ycf12, at least 3 peripheral proteins of the oxygen-evolving complex and a large number of cofactors. It forms dimeric complexes. The D1/D2 heterodimer binds P680, chlorophylls that are the primary electron donor of PSII, and subsequent electron acceptors. It shares a non-heme iron and each subunit binds pheophytin, quinone, additional chlorophylls, carotenoids and lipids. D1 provides most of the ligands for the Mn4-Ca-O5 cluster of the oxygen-evolving complex (OEC). There is also a Cl(-1) ion associated with D1 and D2, which is required for oxygen evolution. The PSII complex binds additional chlorophylls, carotenoids and specific lipids. serves as cofactor. Post-translationally, tyr-161 forms a radical intermediate that is referred to as redox-active TyrZ, YZ or Y-Z. C-terminally processed by CTPA; processing is essential to allow assembly of the oxygen-evolving complex and thus photosynthetic growth.

It localises to the plastid. Its subcellular location is the chloroplast thylakoid membrane. It carries out the reaction 2 a plastoquinone + 4 hnu + 2 H2O = 2 a plastoquinol + O2. Photosystem II (PSII) is a light-driven water:plastoquinone oxidoreductase that uses light energy to abstract electrons from H(2)O, generating O(2) and a proton gradient subsequently used for ATP formation. It consists of a core antenna complex that captures photons, and an electron transfer chain that converts photonic excitation into a charge separation. The D1/D2 (PsbA/PsbD) reaction center heterodimer binds P680, the primary electron donor of PSII as well as several subsequent electron acceptors. In Guillardia theta (Cryptophyte), this protein is Photosystem II protein D1.